A 125-amino-acid polypeptide reads, in one-letter code: Small ribosomal subunit protein uS12 (125 aa).

Residues 1–31 (MPTINQLVRHGRQTEVTKSKSPAMQGGPQRR) form a disordered region. Asp-89 bears the 3-methylthioaspartic acid mark. The segment at 105 to 125 (QGVKDRKQSRSKYGAKRPKKA) is disordered. Residues 113–125 (SRSKYGAKRPKKA) are compositionally biased toward basic residues.

The protein belongs to the universal ribosomal protein uS12 family. As to quaternary structure, part of the 30S ribosomal subunit. Contacts proteins S8 and S17. May interact with IF1 in the 30S initiation complex.

With S4 and S5 plays an important role in translational accuracy. In terms of biological role, interacts with and stabilizes bases of the 16S rRNA that are involved in tRNA selection in the A site and with the mRNA backbone. Located at the interface of the 30S and 50S subunits, it traverses the body of the 30S subunit contacting proteins on the other side and probably holding the rRNA structure together. The combined cluster of proteins S8, S12 and S17 appears to hold together the shoulder and platform of the 30S subunit. This is Small ribosomal subunit protein uS12 from Methylibium petroleiphilum (strain ATCC BAA-1232 / LMG 22953 / PM1).